Consider the following 208-residue polypeptide: Small ribosomal subunit protein uS4 (208 aa).

The 61-residue stretch at 98 to 158 (CRLDTVSYRM…EKAKNHLRIK (61 aa)) folds into the S4 RNA-binding domain.

This sequence belongs to the universal ribosomal protein uS4 family. As to quaternary structure, part of the 30S ribosomal subunit. Contacts protein S5. The interaction surface between S4 and S5 is involved in control of translational fidelity.

Functionally, one of the primary rRNA binding proteins, it binds directly to 16S rRNA where it nucleates assembly of the body of the 30S subunit. Its function is as follows. With S5 and S12 plays an important role in translational accuracy. The protein is Small ribosomal subunit protein uS4 of Nitrosospira multiformis (strain ATCC 25196 / NCIMB 11849 / C 71).